We begin with the raw amino-acid sequence, 308 residues long: F420-non-reducing hydrogenase subunit G (308 aa).

The protein belongs to the [NiFe]/[NiFeSe] hydrogenase small subunit family. In terms of assembly, the F420-non-reducing hydrogenase is composed of three subunits; MvhA, MvhD and MvhG. It forms a complex with the heterodisulfide reductase (hdr).

Part of a complex that provides reducing equivalents for heterodisulfide reductase. This is F420-non-reducing hydrogenase subunit G (mvhG) from Methanothermobacter marburgensis (strain ATCC BAA-927 / DSM 2133 / JCM 14651 / NBRC 100331 / OCM 82 / Marburg) (Methanobacterium thermoautotrophicum).